The chain runs to 379 residues: Succinyl-diaminopimelate desuccinylase (379 aa).

A Zn(2+)-binding site is contributed by His70. Asp72 is a catalytic residue. Asp103 is a Zn(2+) binding site. The active-site Proton acceptor is the Glu137. The Zn(2+) site is built by Glu138, Glu166, and His352.

This sequence belongs to the peptidase M20A family. DapE subfamily. In terms of assembly, homodimer. The cofactor is Zn(2+). Requires Co(2+) as cofactor.

It carries out the reaction N-succinyl-(2S,6S)-2,6-diaminopimelate + H2O = (2S,6S)-2,6-diaminopimelate + succinate. The protein operates within amino-acid biosynthesis; L-lysine biosynthesis via DAP pathway; LL-2,6-diaminopimelate from (S)-tetrahydrodipicolinate (succinylase route): step 3/3. Functionally, catalyzes the hydrolysis of N-succinyl-L,L-diaminopimelic acid (SDAP), forming succinate and LL-2,6-diaminopimelate (DAP), an intermediate involved in the bacterial biosynthesis of lysine and meso-diaminopimelic acid, an essential component of bacterial cell walls. This is Succinyl-diaminopimelate desuccinylase from Shewanella baltica (strain OS155 / ATCC BAA-1091).